We begin with the raw amino-acid sequence, 130 residues long: D-ribose pyranase (130 aa).

H20 functions as the Proton donor in the catalytic mechanism. Substrate is bound by residues D28, H97, and 119–121 (YAN).

This sequence belongs to the RbsD / FucU family. RbsD subfamily. Homodecamer.

It localises to the cytoplasm. It carries out the reaction beta-D-ribopyranose = beta-D-ribofuranose. The protein operates within carbohydrate metabolism; D-ribose degradation; D-ribose 5-phosphate from beta-D-ribopyranose: step 1/2. Its function is as follows. Catalyzes the interconversion of beta-pyran and beta-furan forms of D-ribose. This chain is D-ribose pyranase, found in Heliobacterium modesticaldum (strain ATCC 51547 / Ice1).